The chain runs to 97 residues: Exodeoxyribonuclease 7 small subunit (97 aa).

The tract at residues 1 to 22 is disordered; that stretch reads MAKTASPGATPPDNGTEPLPDN.

Belongs to the XseB family. In terms of assembly, heterooligomer composed of large and small subunits.

It is found in the cytoplasm. It carries out the reaction Exonucleolytic cleavage in either 5'- to 3'- or 3'- to 5'-direction to yield nucleoside 5'-phosphates.. Functionally, bidirectionally degrades single-stranded DNA into large acid-insoluble oligonucleotides, which are then degraded further into small acid-soluble oligonucleotides. The protein is Exodeoxyribonuclease 7 small subunit of Burkholderia ambifaria (strain MC40-6).